Here is a 571-residue protein sequence, read N- to C-terminus: Urease subunit alpha (571 aa).

The Urease domain maps to 133–571 (GGIDTHVHFI…LPLTQRYFLF (439 aa)). 3 residues coordinate Ni(2+): His138, His140, and Lys221. Position 221 is an N6-carboxylysine (Lys221). A substrate-binding site is contributed by His223. Residues His250 and His276 each coordinate Ni(2+). Residue His324 is the Proton donor of the active site. Residue Asp364 participates in Ni(2+) binding.

This sequence belongs to the metallo-dependent hydrolases superfamily. Urease alpha subunit family. As to quaternary structure, heterotrimer of UreA (gamma), UreB (beta) and UreC (alpha) subunits. Three heterotrimers associate to form the active enzyme. Ni cation serves as cofactor. Post-translationally, carboxylation allows a single lysine to coordinate two nickel ions.

It is found in the cytoplasm. The enzyme catalyses urea + 2 H2O + H(+) = hydrogencarbonate + 2 NH4(+). It functions in the pathway nitrogen metabolism; urea degradation; CO(2) and NH(3) from urea (urease route): step 1/1. This chain is Urease subunit alpha, found in Staphylococcus epidermidis (strain ATCC 35984 / DSM 28319 / BCRC 17069 / CCUG 31568 / BM 3577 / RP62A).